The chain runs to 558 residues: Urocanate hydratase (558 aa).

Residues 54 to 55, Q132, 178 to 180, E198, 244 to 245, 265 to 269, 275 to 276, and Y324 each bind NAD(+); these read GG, GMG, NA, QTSAH, and YL. The active site involves C412. G494 is a binding site for NAD(+).

The protein belongs to the urocanase family. It depends on NAD(+) as a cofactor.

The protein resides in the cytoplasm. The enzyme catalyses 4-imidazolone-5-propanoate = trans-urocanate + H2O. It participates in amino-acid degradation; L-histidine degradation into L-glutamate; N-formimidoyl-L-glutamate from L-histidine: step 2/3. In terms of biological role, catalyzes the conversion of urocanate to 4-imidazolone-5-propionate. The chain is Urocanate hydratase from Acinetobacter baumannii (strain AB307-0294).